The following is a 230-amino-acid chain: UPF0758 protein Daud_1467 (230 aa).

Residues 108-230 (TVRTPEEAAG…FTSLKLEGLF (123 aa)) enclose the MPN domain. Zn(2+) is bound by residues histidine 179, histidine 181, and aspartate 192. Residues 179-192 (HNHPSGDPAPSPQD) carry the JAMM motif motif.

Belongs to the UPF0758 family.

In Desulforudis audaxviator (strain MP104C), this protein is UPF0758 protein Daud_1467.